A 280-amino-acid chain; its full sequence is Movement protein (280 aa).

The segment at Glu-248–Ser-267 is disordered. Residues Glu-255 to Ser-267 are compositionally biased toward low complexity.

Belongs to the cucumovirus movement protein family.

Its subcellular location is the host cell junction. The protein resides in the host plasmodesma. Its function is as follows. Transports viral genome to neighboring plant cells directly through plasmosdesmata, without any budding. The movement protein allows efficient cell to cell propagation, by bypassing the host cell wall barrier. Acts by forming a tubular structure at the host plasmodesmata, enlarging it enough to allow free passage of virion capsids. The sequence is that of Movement protein from Cucumis sativus (Cucumber).